An 83-amino-acid polypeptide reads, in one-letter code: Small ribosomal subunit protein bS16 (83 aa).

Belongs to the bacterial ribosomal protein bS16 family.

This Aromatoleum aromaticum (strain DSM 19018 / LMG 30748 / EbN1) (Azoarcus sp. (strain EbN1)) protein is Small ribosomal subunit protein bS16.